A 1321-amino-acid chain; its full sequence is Guanine nucleotide exchange factor subunit RIC1 (1321 aa).

WD repeat units follow at residues 63–102 and 303–342; these read AQFG…DDKY and NKTG…LICT. The segment at 945–964 is disordered; sequence SGESETPPTTPTTQEQSPSS.

In terms of assembly, forms a complex with rgp1; the interaction enhances rab6a GTPase activity.

It is found in the cytoplasm. Its subcellular location is the cytosol. The protein localises to the membrane. In terms of biological role, the RIC1-RGP1 complex acts as a guanine nucleotide exchange factor (GEF), which activates RAB6A by exchanging bound GDP for free GTP, and may be thereby required for efficient fusion of endosome-derived vesicles with the Golgi compartment. The RIC1-RGP1 complex participates in the recycling of mannose-6-phosphate receptors. It is a regulator of procollagen transport and secretion, and is required for correct cartilage morphogenesis and development of the craniofacial skeleton. This chain is Guanine nucleotide exchange factor subunit RIC1 (ric1), found in Danio rerio (Zebrafish).